Here is a 387-residue protein sequence, read N- to C-terminus: Oxidase FUB9 (387 aa).

The disordered stretch occupies residues 1–20; the sequence is MSRTNLPIQPAKMSDATSSK. Residues 18–379 form the FMN hydroxy acid dehydrogenase domain; sequence SSKPQIFSIQ…TPAHLSLLNA (362 aa). Tyr44 is an a 2-oxocarboxylate binding site. 3 residues coordinate FMN: Ser126, Gln150, and Thr178. An a 2-oxocarboxylate-binding site is contributed by Arg187. Lys250 contributes to the FMN binding site. The active-site Proton acceptor is the His274. Arg277 is an a 2-oxocarboxylate binding site. FMN contacts are provided by residues 305–309 and 328–329; these read DGGFR and GR.

It belongs to the FMN-dependent alpha-hydroxy acid dehydrogenase family. FMN serves as cofactor.

It participates in mycotoxin biosynthesis. Its function is as follows. Oxidase; part of the gene cluster that mediates the biosynthesis of fusaric acid, a mycotoxin with low to moderate toxicity to animals and humans, but with high phytotoxic properties. L-aspartate is suggested as fusaric acid amino acid precursor that is activated and further processed to O-acetyl-L-homoserine by cluster enzymes aspartate kinase FUB3 and homoserine O-acetyltransferase FUB5, as well as enzymes of the primary metabolism. The polyketide synthase (PKS) FUB1 generates the triketide trans-2-hexenal which is presumptively released by the hydrolase FUB4 and linked to the NRPS-bound amino acid precursor by NAD(P)-dependent dehydrogenase FUB6. FUB1, FUB4, and the non-canonical NRPS Fub8 may form an enzyme complex. Further processing of the NRPS-bound intermediate might be carried out by FUB6 and the sulfhydrylase FUB7, enabling a spontaneous electrocyclization to close the carbon backbone of fusaric acid. Dihydrofusaric acid is likely to be released via reduction by the thioester reductase (TR) domain of FUB8 whereupon the final oxidation to fusaric acid may (also) be performed by the FMN-dependent dehydrogenase FUB9. In Gibberella moniliformis (strain M3125 / FGSC 7600) (Maize ear and stalk rot fungus), this protein is Oxidase FUB9.